The sequence spans 641 residues: Threonine--tRNA ligase (641 aa).

The TGS domain maps to 1–61 (MPAITLPDGS…ADDASVRFIT (61 aa)). Residues 243–536 (DHRRIGREMD…LIEQHAGRFP (294 aa)) are catalytic. The Zn(2+) site is built by cysteine 336, histidine 387, and histidine 513.

The protein belongs to the class-II aminoacyl-tRNA synthetase family. In terms of assembly, homodimer. Zn(2+) is required as a cofactor.

The protein localises to the cytoplasm. The enzyme catalyses tRNA(Thr) + L-threonine + ATP = L-threonyl-tRNA(Thr) + AMP + diphosphate + H(+). Its function is as follows. Catalyzes the attachment of threonine to tRNA(Thr) in a two-step reaction: L-threonine is first activated by ATP to form Thr-AMP and then transferred to the acceptor end of tRNA(Thr). Also edits incorrectly charged L-seryl-tRNA(Thr). This chain is Threonine--tRNA ligase, found in Gluconacetobacter diazotrophicus (strain ATCC 49037 / DSM 5601 / CCUG 37298 / CIP 103539 / LMG 7603 / PAl5).